The following is a 430-amino-acid chain: Adenylosuccinate synthetase (430 aa).

GTP is bound by residues 12 to 18 (GDEGKGK) and 40 to 42 (GHT). D13 functions as the Proton acceptor in the catalytic mechanism. 2 residues coordinate Mg(2+): D13 and G40. IMP-binding positions include 13–16 (DEGK), 38–41 (NAGH), T129, R143, Q224, T239, and R303. Residue H41 is the Proton donor of the active site. A substrate-binding site is contributed by 299–305 (TVSNRER). Residues R305, 331 to 333 (KLD), and 413 to 415 (STG) each bind GTP.

Belongs to the adenylosuccinate synthetase family. In terms of assembly, homodimer. Requires Mg(2+) as cofactor.

The protein resides in the cytoplasm. It catalyses the reaction IMP + L-aspartate + GTP = N(6)-(1,2-dicarboxyethyl)-AMP + GDP + phosphate + 2 H(+). The protein operates within purine metabolism; AMP biosynthesis via de novo pathway; AMP from IMP: step 1/2. Its function is as follows. Plays an important role in the de novo pathway of purine nucleotide biosynthesis. Catalyzes the first committed step in the biosynthesis of AMP from IMP. The chain is Adenylosuccinate synthetase from Ehrlichia ruminantium (strain Welgevonden).